We begin with the raw amino-acid sequence, 419 residues long: KLAEILMMPGKTVSVEQGMEIPVTHDIGTIRLDGDQGNSGVGIPSSRLVGCMTHERAFGADTMELGHIDYSFKPVKPVVSNECQAMEVCQQNMVIPLFYGAMPNMGLYYTPDGPFENPGDLMKAFKIQEAWESMEHAAEHLTRDTVWVMQKLFASGADGVNFDTTGAAGDGDMYGTLHAIEALRKEFPDMYIEAGMAGECVLGMHGNLQYDGVTLAGLWPHQQAPLVAKAGANVFGPVCNTNTSKTSAWNLARAVTFIKAAVGASPIPCHVNMGMGVGGIPMLETPPIDAVTRASKAMVEIAGVDGIOIGVGDPMGMPISHIMASGMTGMRAAGDLVARMEFSKNMRIGEAKEYVAKKLGVDKMDLVDEHVMRELREELDIGIITSVPGAAKGIAAKMNIEKLLGIKINSCNLFRKQIA.

Pyl-308 is a non-standard amino acid (pyrrolysine).

It belongs to the dimethylamine methyltransferase family.

It catalyses the reaction Co(I)-[dimethylamine-specific corrinoid protein] + dimethylamine + H(+) = methyl-Co(III)-[dimethylamine-specific corrinoid protein] + methylamine. It participates in one-carbon metabolism; methanogenesis from dimethylamine. Functionally, catalyzes the transfer of a methyl group from dimethylamine to the corrinoid cofactor of MtbC. No evidence for expression of this protein has been found after growth under presumably inducing conditions. The protein is Dimethylamine methyltransferase MtbB2 of Methanosarcina barkeri.